A 652-amino-acid chain; its full sequence is MKLLWQVTVHHTWNAVLLPVVYLTAQVWILCAAIAAAASAGPQNCPSVCSCSNQFSKVVCTRRGLSEVPQGIPSNTRYLNLMENNIQMIQADTFRHLHHLEVLQLGRNAIRQIEVGAFNGLASLNTLELFDNWLTVIPSGAFEYLSKLRELWLRNNPIESIPSYAFNRVPSLMRLDLGELKKLEYISEGAFEGLFNLKYLNLGMCNIKDMPNLTPLVGLEELEMSGNHFPEIRPGSFHGLSSLKKLWVMNSQVSLIERNAFDGLASLVELNLAHNNLSSLPHDLFTPLRYLVELHLHHNPWNCDCDILWLAWWLREYIPTNSTCCGRCHAPMHMRGRYLVEVDQASFQCSAPFIMDAPRDLNISEDRMAELKCRTPPMSSVKWLLPNGTVLSHASRHPRISVLNDGTLNFSRVLLIDTGVYTCMVTNVAGNSNASAYLNVSSAELNTPNFSFFTTVTVETTEISPEDITRKYKPVPTTSTGYQPAYTTSTTVLIQTTRVPKQVPVPSTDTTDKMQTSLDEVMKTTKIIIGCFVAVTLLAAAMLIVFYKLRKRHQQRSTVTAARTVEIIQVDEDIPAAASAAATAAPSGVSGEGAVVLPTIHDHINYNTYKPAHGAHWTENSLGNSLHPTVTTISEPYIIQTHTKDKVQETQI.

Positions 1-40 (MKLLWQVTVHHTWNAVLLPVVYLTAQVWILCAAIAAAASA) are cleaved as a signal peptide. Topologically, residues 1–526 (MKLLWQVTVH…SLDEVMKTTK (526 aa)) are extracellular. Residues 41 to 74 (GPQNCPSVCSCSNQFSKVVCTRRGLSEVPQGIPS) enclose the LRRNT domain. Intrachain disulfides connect Cys-45–Cys-51 and Cys-49–Cys-60. 9 LRR repeats span residues 75 to 96 (NTRYLNLMENNIQMIQADTFRH), 99 to 120 (HLEVLQLGRNAIRQIEVGAFNG), 123 to 144 (SLNTLELFDNWLTVIPSGAFEY), 147 to 168 (KLRELWLRNNPIESIPSYAFNR), 171 to 193 (SLMRLDLGELKKLEYISEGAFEG), 196 to 217 (NLKYLNLGMCNIKDMPNLTPLV), 218 to 239 (GLEELEMSGNHFPEIRPGSFHG), 242 to 263 (SLKKLWVMNSQVSLIERNAFDG), and 266 to 287 (SLVELNLAHNNLSSLPHDLFTP). Positions 299 to 351 (NPWNCDCDILWLAWWLREYIPTNSTCCGRCHAPMHMRGRYLVEVDQASFQCSA) constitute an LRRCT domain. Cystine bridges form between Cys-303–Cys-328 and Cys-305–Cys-349. N-linked (GlcNAc...) asparagine glycans are attached at residues Asn-321 and Asn-362. Residues 352-441 (PFIMDAPRDL…SNASAYLNVS (90 aa)) form the Ig-like C2-type domain. Cys-373 and Cys-423 are oxidised to a cystine. Residues 527 to 547 (IIIGCFVAVTLLAAAMLIVFY) traverse the membrane as a helical segment. The Cytoplasmic portion of the chain corresponds to 548 to 652 (KLRKRHQQRS…TKDKVQETQI (105 aa)).

Interacts (via LRR repeats) with NTNG2. Interacts with DLG4. Found in a complex with NMDA receptors. In terms of processing, N-glycosylated. Mainly expressed in the brain. Expression is concentrated in the olfactory bulb, cortex, hippocampus and cerebellum in adult brain. Detected both embryonically and postnatally with stronger expression in postnatal stages.

Its subcellular location is the membrane. The protein localises to the postsynaptic cell membrane. Functionally, synaptic adhesion protein. Regulates the formation of exitatory synapses through the recruitment of pre-and-postsynaptic proteins. Organize the lamina/pathway-specific differentiation of dendrites. Plays an important role for auditory synaptic responses. Involved in the suppression of glioma. In Rattus norvegicus (Rat), this protein is Leucine-rich repeat-containing protein 4 (Lrrc4).